We begin with the raw amino-acid sequence, 216 residues long: Elongation factor Ts (216 aa).

Residues 81–84 (TDFV) form an involved in Mg(2+) ion dislocation from EF-Tu region.

It belongs to the EF-Ts family.

The protein localises to the cytoplasm. Functionally, associates with the EF-Tu.GDP complex and induces the exchange of GDP to GTP. It remains bound to the aminoacyl-tRNA.EF-Tu.GTP complex up to the GTP hydrolysis stage on the ribosome. This chain is Elongation factor Ts, found in Geobacter sp. (strain M21).